A 78-amino-acid polypeptide reads, in one-letter code: Hainantoxin-XX.2 (78 aa).

The signal sequence occupies residues 1–23 (MKSATLLALSYLLIALYFLICEA). A propeptide spanning residues 24 to 47 (EHSRYEEHEILEENMGDVVNLEQR) is cleaved from the precursor. Cystine bridges form between C49-C62, C56-C66, and C61-C77.

Belongs to the hainantoxin family. 20 subfamily. In terms of tissue distribution, expressed by the venom gland.

The protein resides in the secreted. In terms of biological role, moderately inhibits Kv1.1/KCNA1 and Kv1.2/KCNA2 and weakly inhibits Kv1.3/KCNA3, and Kv2.1/KCNB1 voltage-gated potassium channels. The sequence is that of Hainantoxin-XX.2 from Cyriopagopus hainanus (Chinese bird spider).